Consider the following 145-residue polypeptide: Aminoglycoside N(6')-acetyltransferase type 1 (145 aa).

The region spanning 1 to 145 (MNIKPASEAS…KVVYFSKKID (145 aa)) is the N-acetyltransferase domain. Positions 22, 65, and 78 each coordinate substrate. Acetyl-CoA is bound at residue 80–82 (IYV). Residue D114 coordinates substrate. Acetyl-CoA is bound at residue N119. Position 135 (E135) interacts with substrate.

In terms of assembly, homodimer.

It carries out the reaction kanamycin B + acetyl-CoA = N(6')-acetylkanamycin B + CoA + H(+). Functionally, catalyzes the transfer of an acetyl group from acetyl-CoA to the 6'-amino group of aminoglycoside molecules conferring resistance to antibiotics containing the purpurosamine ring including amikacin, kanamycin, tobramycin and netilmicin. The chain is Aminoglycoside N(6')-acetyltransferase type 1 from Acinetobacter haemolyticus.